The chain runs to 493 residues: Activin receptor type-1C (493 aa).

Positions 1–20 (MTRALCSALRQALLLLAAAA) are cleaved as a signal peptide. The Extracellular segment spans residues 22 to 113 (LSPGLKCVCL…PNAPKLGPME (92 aa)). Residues 114-134 (LAIIITVPVCLLSIAAMLTVW) traverse the membrane as a helical segment. Residues 135-493 (ACQGRQCSYR…QLCVKEDCKA (359 aa)) lie on the Cytoplasmic side of the membrane. A GS domain is found at 165 to 194 (KTLKDLIYDVTASGSGSGLPLLVQRTIART). The Protein kinase domain maps to 195–485 (IVLQEIVGKG…LRIKKTISQL (291 aa)). ATP contacts are provided by residues 201 to 209 (VGKGRFGEV) and lysine 222. Aspartate 323 (proton acceptor) is an active-site residue.

This sequence belongs to the protein kinase superfamily. TKL Ser/Thr protein kinase family. TGFB receptor subfamily. In terms of assembly, binds the type 2 receptor protein ACVR2A. The cofactor is Mg(2+). Mn(2+) serves as cofactor. Present in pancreas, heart, colon, small intestine, ovary and the hippocampus, medulla oblongata and putamen of the brain. Isoform 1, isoform 2, isoform 3 and isoform 4 are all expressed in the placenta throughout pregnancy.

It localises to the membrane. The enzyme catalyses L-threonyl-[receptor-protein] + ATP = O-phospho-L-threonyl-[receptor-protein] + ADP + H(+). It catalyses the reaction L-seryl-[receptor-protein] + ATP = O-phospho-L-seryl-[receptor-protein] + ADP + H(+). Its function is as follows. Serine/threonine protein kinase which forms a receptor complex on ligand binding. The receptor complex consists of 2 type II and 2 type I transmembrane serine/threonine kinases. Type II receptors phosphorylate and activate type I receptors which autophosphorylate, then bind and activate SMAD transcriptional regulators, SMAD2 and SMAD3. Receptor for activin AB, activin B, activin E and NODAL. Upon NODAL binding, activation results in increased apoptosis and reduced proliferation through suppression of AKT signaling and the activation of Smad2-dependent signaling pathway in pancreatic beta-cells, trophoblasts, epithelial or neuronal cells. Acts as a positive regulator for macrophage activation partially through down-regulation of PPARG expression. The protein is Activin receptor type-1C of Homo sapiens (Human).